The chain runs to 828 residues: Kinesin-associated protein 3 (828 aa).

ARM repeat units follow at residues 332–372 (YVEN…NLSF), 373–411 (DTDLRGKMIKLGMLPKFVELLANDNHRLVVLCVLYHVSQ), and 577–611 (DDSCAAMLAKSGIIQSLIELLNAKQEDDEIVCQIV).

In terms of assembly, heterotrimer of a 115 kDa subunit (KAP115) and two kinesin-like subunits of 95 kDa (KRP95) and 85 kDa (KRP85).

Its function is as follows. Binds to the tail domain of the KRP85/KRP95 heterodimer to form a heterotrimeric kinesin-II complex and may regulate the spindle vesicle targeting of this complex. This chain is Kinesin-associated protein 3 (KAP115), found in Strongylocentrotus purpuratus (Purple sea urchin).